A 164-amino-acid polypeptide reads, in one-letter code: MTDTQVTWLTQESHDRLKAELDQLIANRPVIAAEINDRREEGDLRENGGYHAAREEQGQQEARIRQLQDLLSNAKVGEAPKQSGVALPGSVVKVYYNGDKSDSETFLIATRQEGVSDGKLEVYSPNSPLGGALIDAKVGETRSYTVPNGSTVSVTLVSAEPYHS.

The stretch at 50 to 76 forms a coiled coil; it reads YHAAREEQGQQEARIRQLQDLLSNAKV.

The protein belongs to the GreA/GreB family.

In terms of biological role, necessary for efficient RNA polymerase transcription elongation past template-encoded arresting sites. The arresting sites in DNA have the property of trapping a certain fraction of elongating RNA polymerases that pass through, resulting in locked ternary complexes. Cleavage of the nascent transcript by cleavage factors such as GreA or GreB allows the resumption of elongation from the new 3'terminus. GreA releases sequences of 2 to 3 nucleotides. This Mycobacterium bovis (strain ATCC BAA-935 / AF2122/97) protein is Transcription elongation factor GreA.